Here is a 483-residue protein sequence, read N- to C-terminus: MAYQGIDLLSTKAAGDDHGENSSYFDGWKAYDTNPFDLRHNRGGVIQMGLAENQLSLDLIEEWSKNHPEASICTPEGVSQFKRIANFQDYHGLPEFRKAMAQFMGQVRGGKATFDPDRVVMSGGATGAQETLAFCLANPGEAFLVPTPYYPAFDRDCCWRSGIKLLPIECHSFNDFRLTKEALVSAYDGARRQGISVKGILITNPSNPLGTITDRDTLAMLATFATEHRVHLVCDEIYAGSVFATPEYVSIAEVIERDVPWCNRDLIHVVYSLSKDFGLPGFRVGIIYSYNDAVVAAARRMSSFGLVSSQTQYFLARMLSDEEFIGRFLQESKCRLVARHERFTSGLREVGIGCLRGNAGLFSWMDLRRMLREKTAEAELELWRVIVHQVKLNVSPGTSFHCREPGWFRVCHANMDDETMEVALGRIHDFVRQHQQRRVKAERWAANRQLRLSLPHHHHLSPAHLSSPLALLSPQSPMVRATS.

Position 275 is an N6-(pyridoxal phosphate)lysine (Lys275).

Belongs to the class-I pyridoxal-phosphate-dependent aminotransferase family. It depends on pyridoxal 5'-phosphate as a cofactor.

It carries out the reaction S-adenosyl-L-methionine = 1-aminocyclopropane-1-carboxylate + S-methyl-5'-thioadenosine + H(+). Its pathway is alkene biosynthesis; ethylene biosynthesis via S-adenosyl-L-methionine; ethylene from S-adenosyl-L-methionine: step 1/2. In terms of biological role, catalyzes the formation of 1-aminocyclopropane-1-carboxylate, a direct precursor of ethylene in higher plants. Involved in defense response by producing ethylene after pathogen infection. Involved in several phosphate deficiency-induced adaptive responses, such as lateral root elongation. This chain is 1-aminocyclopropane-1-carboxylate synthase 2, found in Oryza sativa subsp. japonica (Rice).